The primary structure comprises 555 residues: Arginine--tRNA ligase (555 aa).

The short motif at 117–127 is the 'HIGH' region element; it reads ANPNGPLHVGH.

This sequence belongs to the class-I aminoacyl-tRNA synthetase family.

Its subcellular location is the cytoplasm. It catalyses the reaction tRNA(Arg) + L-arginine + ATP = L-arginyl-tRNA(Arg) + AMP + diphosphate. This is Arginine--tRNA ligase from Methanospirillum hungatei JF-1 (strain ATCC 27890 / DSM 864 / NBRC 100397 / JF-1).